Consider the following 259-residue polypeptide: 14-3-3-like protein (259 aa).

The segment at 238 to 259 (MQDPAAGDDREGADMKVEDAEP) is disordered. The segment covering 244 to 259 (GDDREGADMKVEDAEP) has biased composition (basic and acidic residues).

Belongs to the 14-3-3 family.

This chain is 14-3-3-like protein, found in Chlamydomonas reinhardtii (Chlamydomonas smithii).